The sequence spans 587 residues: Arginine--tRNA ligase (587 aa).

The short motif at alanine 126–histidine 136 is the 'HIGH' region element.

This sequence belongs to the class-I aminoacyl-tRNA synthetase family. Monomer.

The protein resides in the cytoplasm. It carries out the reaction tRNA(Arg) + L-arginine + ATP = L-arginyl-tRNA(Arg) + AMP + diphosphate. The sequence is that of Arginine--tRNA ligase from Aromatoleum aromaticum (strain DSM 19018 / LMG 30748 / EbN1) (Azoarcus sp. (strain EbN1)).